Reading from the N-terminus, the 391-residue chain is Succinate--CoA ligase [ADP-forming] subunit beta (391 aa).

The ATP-grasp domain occupies 9-245 (KQIFAEYGVP…LSEEDPDEVE (237 aa)). Residues lysine 46, 53–55 (GRG), glutamate 99, alanine 102, and glutamate 107 each bind ATP. Positions 200 and 214 each coordinate Mg(2+). Substrate-binding positions include asparagine 265 and 322-324 (GIV).

It belongs to the succinate/malate CoA ligase beta subunit family. Heterotetramer of two alpha and two beta subunits. The cofactor is Mg(2+).

It carries out the reaction succinate + ATP + CoA = succinyl-CoA + ADP + phosphate. The catalysed reaction is GTP + succinate + CoA = succinyl-CoA + GDP + phosphate. It participates in carbohydrate metabolism; tricarboxylic acid cycle; succinate from succinyl-CoA (ligase route): step 1/1. Its function is as follows. Succinyl-CoA synthetase functions in the citric acid cycle (TCA), coupling the hydrolysis of succinyl-CoA to the synthesis of either ATP or GTP and thus represents the only step of substrate-level phosphorylation in the TCA. The beta subunit provides nucleotide specificity of the enzyme and binds the substrate succinate, while the binding sites for coenzyme A and phosphate are found in the alpha subunit. The sequence is that of Succinate--CoA ligase [ADP-forming] subunit beta from Sulfurovum sp. (strain NBC37-1).